The sequence spans 430 residues: Adenylosuccinate synthetase (430 aa).

GTP contacts are provided by residues 12–18 (GDEGKGK) and 40–42 (GHT). Asp13 (proton acceptor) is an active-site residue. Positions 13 and 40 each coordinate Mg(2+). IMP-binding positions include 13 to 16 (DEGK), 38 to 41 (NAGH), Thr130, Arg144, Gln224, Thr239, and Arg303. The active-site Proton donor is His41. 299 to 305 (TVTGRKR) contributes to the substrate binding site. Residues Arg305, 331–333 (KLD), and 413–415 (STS) each bind GTP.

Belongs to the adenylosuccinate synthetase family. In terms of assembly, homodimer. Mg(2+) is required as a cofactor.

It localises to the cytoplasm. It catalyses the reaction IMP + L-aspartate + GTP = N(6)-(1,2-dicarboxyethyl)-AMP + GDP + phosphate + 2 H(+). Its pathway is purine metabolism; AMP biosynthesis via de novo pathway; AMP from IMP: step 1/2. Its function is as follows. Plays an important role in the de novo pathway of purine nucleotide biosynthesis. Catalyzes the first committed step in the biosynthesis of AMP from IMP. This Cereibacter sphaeroides (strain ATCC 17029 / ATH 2.4.9) (Rhodobacter sphaeroides) protein is Adenylosuccinate synthetase.